The sequence spans 151 residues: Large ribosomal subunit protein uL13 (151 aa).

Belongs to the universal ribosomal protein uL13 family. In terms of assembly, part of the 50S ribosomal subunit.

Functionally, this protein is one of the early assembly proteins of the 50S ribosomal subunit, although it is not seen to bind rRNA by itself. It is important during the early stages of 50S assembly. In Synechococcus sp. (strain JA-2-3B'a(2-13)) (Cyanobacteria bacterium Yellowstone B-Prime), this protein is Large ribosomal subunit protein uL13.